Consider the following 92-residue polypeptide: MELNILSKTDNELEVKLKGETHTLLNILKDLLIKDQRVEIAFYDMKYVSISDPILYIKTDGTNPIEVLKDAASQIISQCDEFTDVFSKAVNA.

It belongs to the archaeal Rpo11/eukaryotic RPB11/RPC19 RNA polymerase subunit family. Part of the RNA polymerase complex.

Its subcellular location is the cytoplasm. The catalysed reaction is RNA(n) + a ribonucleoside 5'-triphosphate = RNA(n+1) + diphosphate. DNA-dependent RNA polymerase (RNAP) catalyzes the transcription of DNA into RNA using the four ribonucleoside triphosphates as substrates. This chain is DNA-directed RNA polymerase subunit Rpo11, found in Methanosarcina barkeri (strain Fusaro / DSM 804).